The chain runs to 188 residues: Probable manganese efflux pump MntP (188 aa).

The next 5 membrane-spanning stretches (helical) occupy residues 3–23, 66–86, 106–128, 143–163, and 168–188; these read ITATVLLAFGMSMDAFAASIG, LEWNHWIAFVLLIFLGGRMII, WLLVTTAIATSLDAMAVGVGLAF, ATLIMSTLGMMVGRFIGSIIG, and ILGGLVLIGIGVQILWTHFHG.

The protein belongs to the MntP (TC 9.B.29) family.

The protein resides in the cell inner membrane. Functionally, probably functions as a manganese efflux pump. This is Probable manganese efflux pump MntP from Shigella flexneri serotype 5b (strain 8401).